We begin with the raw amino-acid sequence, 436 residues long: 3-ketoacyl-CoA thiolase (436 aa).

The active-site Acyl-thioester intermediate is the Cys99. Active-site proton acceptor residues include His392 and Cys422.

It belongs to the thiolase-like superfamily. Thiolase family. As to quaternary structure, heterotetramer of two alpha chains (FadJ) and two beta chains (FadI).

It is found in the cytoplasm. It carries out the reaction an acyl-CoA + acetyl-CoA = a 3-oxoacyl-CoA + CoA. Its pathway is lipid metabolism; fatty acid beta-oxidation. Its function is as follows. Catalyzes the final step of fatty acid oxidation in which acetyl-CoA is released and the CoA ester of a fatty acid two carbons shorter is formed. This is 3-ketoacyl-CoA thiolase from Shigella flexneri.